A 695-amino-acid polypeptide reads, in one-letter code: Elongation factor G (695 aa).

One can recognise a tr-type G domain in the interval 12–286 (DKIRNIGIMA…AVIDYLPSPL (275 aa)). GTP contacts are provided by residues 21-28 (AHIDAGKT), 85-89 (DTPGH), and 139-142 (NKMD).

Belongs to the TRAFAC class translation factor GTPase superfamily. Classic translation factor GTPase family. EF-G/EF-2 subfamily.

The protein localises to the cytoplasm. Catalyzes the GTP-dependent ribosomal translocation step during translation elongation. During this step, the ribosome changes from the pre-translocational (PRE) to the post-translocational (POST) state as the newly formed A-site-bound peptidyl-tRNA and P-site-bound deacylated tRNA move to the P and E sites, respectively. Catalyzes the coordinated movement of the two tRNA molecules, the mRNA and conformational changes in the ribosome. The chain is Elongation factor G from Thermotoga neapolitana (strain ATCC 49049 / DSM 4359 / NBRC 107923 / NS-E).